A 1324-amino-acid chain; its full sequence is Mediator of RNA polymerase II transcription subunit 13 (1324 aa).

6 disordered regions span residues glutamate 296–alanine 346, phenylalanine 386–alanine 455, glycine 535–isoleucine 590, histidine 607–serine 631, lysine 694–alanine 816, and threonine 1151–tyrosine 1198. Positions glycine 298–glutamine 331 are enriched in polar residues. Residues aspartate 398–asparagine 407 show a composition bias toward acidic residues. Positions aspartate 408–glutamate 442 are enriched in basic and acidic residues. Positions aspartate 546 to serine 566 are enriched in low complexity. Composition is skewed to basic and acidic residues over residues valine 567–glutamate 578 and histidine 607–serine 617. Low complexity-rich tracts occupy residues serine 618–serine 631 and serine 724–alanine 743. Polar residues predominate over residues leucine 750–alanine 784. 2 stretches are compositionally biased toward low complexity: residues serine 785–alanine 816 and threonine 1172–proline 1184.

It belongs to the Mediator complex subunit 13 family. As to quaternary structure, component of the SRB8-11 complex, which itself associates with the Mediator complex.

Its subcellular location is the nucleus. Component of the SRB8-11 complex. The SRB8-11 complex is a regulatory module of the Mediator complex which is itself involved in regulation of basal and activated RNA polymerase II-dependent transcription. The SRB8-11 complex may be involved in the transcriptional repression of a subset of genes regulated by Mediator. It may inhibit the association of the Mediator complex with RNA polymerase II to form the holoenzyme complex. This chain is Mediator of RNA polymerase II transcription subunit 13 (SSN2), found in Yarrowia lipolytica (strain CLIB 122 / E 150) (Yeast).